The chain runs to 382 residues: LIM homeobox transcription factor 1-alpha (382 aa).

LIM zinc-binding domains lie at 33–92 (SVCE…LFAV) and 92–154 (VKCG…EREL). Disordered regions lie at residues 161–208 (AASD…QQRR) and 252–286 (KLAR…MEGI). A DNA-binding region (homeobox) is located at residues 195–254 (PKRPRTILTTQQRRAFKASFEVSSKPCRKVRETLAAETGLSVRVVQVWFQNQRAKMKKLA). Residues 256 to 269 (RQQQQQQDQQNTQR) are compositionally biased toward low complexity.

The protein resides in the nucleus. Functionally, acts as a transcriptional activator by binding to an A/T-rich sequence, the FLAT element, in the insulin gene promoter. Required for development of the roof plate and, in turn, for specification of dorsal cell fates in the CNS and developing vertebrae. In Mus musculus (Mouse), this protein is LIM homeobox transcription factor 1-alpha (Lmx1a).